Consider the following 1013-residue polypeptide: Poly [ADP-ribose] polymerase 1 (1013 aa).

A2 bears the N-acetylalanine mark. Residues Y9 to G93 form a PARP-type 1 zinc finger. The Zn(2+) site is built by C21 and C24. S41 is modified (phosphoserine). H53 and C56 together coordinate Zn(2+). Residues K97 and K105 each carry the N6-acetyllysine modification. The PARP-type 2 zinc-finger motif lies at F113–K203. Zn(2+) contacts are provided by C125 and C128. N6-acetyllysine is present on K131. Zn(2+) is bound by residues H159 and C162. A phosphoserine mark is found at S177, S179, and S185. Residue K192 forms a Glycyl lysine isopeptide (Lys-Gly) (interchain with G-Cter in SUMO2) linkage. The segment at P200–K226 is disordered. Residue K203 forms a Glycyl lysine isopeptide (Lys-Gly) (interchain with G-Cter in SUMO1); alternate linkage. K203 participates in a covalent cross-link: Glycyl lysine isopeptide (Lys-Gly) (interchain with G-Cter in SUMO2); alternate. Positions N204 to K226 are enriched in basic and acidic residues. 2 consecutive short sequence motifs (nuclear localization signal) follow at residues K207–K209 and K221–K226. Positions R225 to P359 constitute a PADR1 zinc-binding domain. Residue K249 forms a Glycyl lysine isopeptide (Lys-Gly) (interchain with G-Cter in SUMO2) linkage. Phosphoserine is present on residues S274 and S277. The interval G290–E332 is zinc ribbon. Residues C295, C298, C311, and C321 each coordinate Zn(2+). The interval V373–K523 is automodification domain. Residues P385–H476 enclose the BRCT domain. D387 is modified (polyADP-ribosyl aspartic acid). Residues E407, E413, E435, E437, E444, E445, E448, and E456 each carry the polyADP-ribosyl glutamic acid modification. A Glycyl lysine isopeptide (Lys-Gly) (interchain with G-Cter in SUMO2) cross-link involves residue K467. Position 484 is a polyADP-ribosyl glutamic acid (E484). K486 is covalently cross-linked (Glycyl lysine isopeptide (Lys-Gly) (interchain with G-Cter in SUMO1); alternate). Residue K486 forms a Glycyl lysine isopeptide (Lys-Gly) (interchain with G-Cter in SUMO2); alternate linkage. Residues E488 and E491 each carry the polyADP-ribosyl glutamic acid modification. The segment at P489–G508 is disordered. The span at A494–S503 shows a compositional bias: low complexity. S499, S503, and S506 each carry ADP-ribosylserine. Residue K511 forms a Glycyl lysine isopeptide (Lys-Gly) (interchain with G-Cter in SUMO2) linkage. A polyADP-ribosyl glutamic acid mark is found at E512 and E513. ADP-ribosylserine is present on S518. The residue at position 519 (E519) is a PolyADP-ribosyl glutamic acid. N6-(ADP-ribosyl)lysine is present on K520. A Glycyl lysine isopeptide (Lys-Gly) (interchain with G-Cter in SUMO2) cross-link involves residue K527. The WGR domain maps to S541 to F637. Position 593 is a phosphothreonine (T593). K599 and K620 each carry N6-acetyllysine. The PARP alpha-helical domain occupies K661–R778. K747 participates in a covalent cross-link: Glycyl lysine isopeptide (Lys-Gly) (interchain with G-Cter in SUMO1); alternate. A Glycyl lysine isopeptide (Lys-Gly) (interchain with G-Cter in SUMO2); alternate cross-link involves residue K747. S781 and S785 each carry phosphoserine. The PARP catalytic domain maps to D787 to W1013. NAD(+) contacts are provided by residues H861–S863, G870, R877, and S903. E987 acts as the For poly [ADP-ribose] polymerase activity in catalysis.

The protein belongs to the ARTD/PARP family. Homodimer; PARP-type zinc-fingers from separate PARP1 molecules form a dimer module that specifically recognizes DNA strand breaks. Heterodimer; heterodimerizes with PARP2. Interacts (via the PARP catalytic domain) with HPF1. Interacts with NMNAT1. Interacts with nucleosomes; with a preference for nucleosomes containing H2A.X. Interacts with APTX. Component of a base excision repair (BER) complex, containing at least XRCC1, PARP1, PARP2, POLB and LRIG3. Interacts with SRY. The SWAP complex consists of NPM1, NCL, PARP1 and SWAP70. Interacts with TIAM2. Interacts with PARP3; leading to activate PARP1 in absence of DNA. Interacts (when poly-ADP-ribosylated) with CHD1L (via macro domain). Interacts with the DNA polymerase alpha catalytic subunit POLA1; this interaction functions as part of the control of replication fork progression. Interacts with EEF1A1 and TXK. Interacts with RNF4. Interacts with RNF146. Interacts with ZNF423. Interacts with APLF. Interacts with SNAI1 (via zinc fingers); the interaction requires SNAI1 to be poly-ADP-ribosylated and non-phosphorylated (active) by GSK3B. Interacts (when poly-ADP-ribosylated) with PARP9. Interacts with NR4A3; activates PARP1 by improving acetylation of PARP1 and suppressing the interaction between PARP1 and SIRT1. Interacts (via catalytic domain) with PUM3; the interaction inhibits the poly-ADP-ribosylation activity of PARP1 and the degradation of PARP1 by CASP3 following genotoxic stress. Interacts with ZNF365. Interacts with RRP1B. Interacts with TIMELESS; the interaction is direct. Interacts with CGAS; leading to impede the formation of the PARP1-TIMELESS complex. Interacts with KHDC3L, the interaction is increased following the formation of DNA double-strand breaks. Interacts (when auto-poly-ADP-ribosylated) with XRCC1; leading to inhibit PARP1 ADP-ribosyltransferase activity. Interacts with SPINDOC; promoting PARP1 ADP-ribosyltransferase activity. Interacts with BANF1; leading to inhibit PARP1 ADP-ribosyltransferase activity in response to oxidative DNA damage. Interacts (when sumoylated and ubiquitinated) with VCP/p97; leading to its extraction from chromatin. Interacts with YARS1; promoting PARP1 ADP-ribosyltransferase activity. Interacts with PACMP micropeptide; Interacts with PACMP micropeptide; interaction. Interacts (when poly-ADP-ribosylated) with isoform 1 of MACROH2A1; MACROH2A1 specifically binds to poly-ADP-ribose chains and inhibits PARP1 activity, limiting the consumption of nuclear NAD(+). Interacts with CARM1; promoting recruitment to replication forks. Interacts with RECQL. Interacts with ZNF32; the interaction reshapes ZNF432 interacting proteins. Interacts with TPRN; TPRN interacts with a number of DNA damage response proteins, is recruited to sites of DNA damage and may play a role in DNA damage repair. As to quaternary structure, interacts (when auto-poly-ADP-ribosylated) with AIFM1. Poly-ADP-ribosylated on serine, glutamate and aspartate residues by autocatalysis. Auto-ADP-ribosylation on serine takes place following interaction with HPF1. Auto poly-ADP-ribosylation on serine residues promotes its dissociation from chromatin. Poly-ADP-ribosylated by PARP2; poly-ADP-ribosylation mediates the recruitment of CHD1L to DNA damage sites. Mono-ADP-ribosylated at Lys-520 by SIRT6 in response to oxidative stress, promoting recruitment to double-strand breaks (DSBs) sites. Post-translationally, S-nitrosylated, leading to inhibit transcription regulation activity. In terms of processing, phosphorylated at Thr-593 by PRKDC in response to DNA damage following virus infection, promoting its translocation to the cytosol. Phosphorylated by TXK. Proteolytically cleaved by caspase-3 (CASP3) and caspase-7 (CASP7) in response to apoptosis to generate the Poly [ADP-ribose] polymerase 1, processed N-terminus and Poly [ADP-ribose] polymerase 1, processed C-terminus forms. Post-translationally, sumoylated with SUMO1 or SUMO2 by PIAS4 following prolonged residence (trapping) to chromatin. Sumoylation promotes ubiquitination by RNF4 and removal from chromatin by VCP/p97. In terms of processing, ubiquitinated by RNF4 following sumoylation by PIAS4 in response to prolonged residence (trapping) to chromatin. Ubiquitination promotes removal from chromatin by VCP/p97. Widely expressed. Expression is correlated with proliferation, with higher levels occurring during early fetal development and organogenesis and in the highly proliferative cell compartments of adult. Expressed in B-cells that have been induced to switch to various Ig isotypes.

The protein resides in the chromosome. It is found in the nucleus. Its subcellular location is the nucleolus. It localises to the cytoplasm. The protein localises to the cytosol. It catalyses the reaction NAD(+) + (ADP-D-ribosyl)n-acceptor = nicotinamide + (ADP-D-ribosyl)n+1-acceptor + H(+).. It carries out the reaction L-seryl-[protein] + NAD(+) = O-(ADP-D-ribosyl)-L-seryl-[protein] + nicotinamide + H(+). The enzyme catalyses L-aspartyl-[protein] + NAD(+) = 4-O-(ADP-D-ribosyl)-L-aspartyl-[protein] + nicotinamide. The catalysed reaction is L-glutamyl-[protein] + NAD(+) = 5-O-(ADP-D-ribosyl)-L-glutamyl-[protein] + nicotinamide. It catalyses the reaction L-tyrosyl-[protein] + NAD(+) = O-(ADP-D-ribosyl)-L-tyrosyl-[protein] + nicotinamide + H(+). It carries out the reaction L-histidyl-[protein] + NAD(+) = N(tele)-(ADP-D-ribosyl)-L-histidyl-[protein] + nicotinamide + H(+). With respect to regulation, ADP-ribosyltransferase activity is regulated via an allosteric activation mechanism. In absence of activation signal, PARP1 is autoinhibited by the PARP alpha-helical domain (also named HD region), which prevents effective NAD(+)-binding. Activity is highly stimulated by signals, such as DNA strand breaks. Binding to damaged DNA unfolds the PARP alpha-helical domain, relieving autoinhibition. Poly-ADP-ribosyltransferase activity is tightly regulated and PARP1 is removed from damaged chromatin following initial poly-ADP-ribosylation of chromatin to avoid prolonged residence (trapping) that has cytotoxic consequences. A number of factors (VCP/p97) or post-translational modifications (auto-poly-ADP-ribosylation or ubiquitination) promote PARP1 removal from chromatin. Functionally, poly-ADP-ribosyltransferase that mediates poly-ADP-ribosylation of proteins and plays a key role in DNA repair. Mediates glutamate, aspartate, serine, histidine or tyrosine ADP-ribosylation of proteins: the ADP-D-ribosyl group of NAD(+) is transferred to the acceptor carboxyl group of target residues and further ADP-ribosyl groups are transferred to the 2'-position of the terminal adenosine moiety, building up a polymer with an average chain length of 20-30 units. Serine ADP-ribosylation of proteins constitutes the primary form of ADP-ribosylation of proteins in response to DNA damage. Specificity for the different amino acids is conferred by interacting factors, such as HPF1 and NMNAT1. Following interaction with HPF1, catalyzes serine ADP-ribosylation of target proteins; HPF1 confers serine specificity by completing the PARP1 active site. Also catalyzes tyrosine ADP-ribosylation of target proteins following interaction with HPF1. Following interaction with NMNAT1, catalyzes glutamate and aspartate ADP-ribosylation of target proteins; NMNAT1 confers glutamate and aspartate specificity. PARP1 initiates the repair of DNA breaks: recognizes and binds DNA breaks within chromatin and recruits HPF1, licensing serine ADP-ribosylation of target proteins, such as histones (H2BS6ADPr and H3S10ADPr), thereby promoting decompaction of chromatin and the recruitment of repair factors leading to the reparation of DNA strand breaks. HPF1 initiates serine ADP-ribosylation but restricts the polymerase activity of PARP1 in order to limit the length of poly-ADP-ribose chains. In addition to base excision repair (BER) pathway, also involved in double-strand breaks (DSBs) repair: together with TIMELESS, accumulates at DNA damage sites and promotes homologous recombination repair by mediating poly-ADP-ribosylation. Mediates the poly-ADP-ribosylation of a number of proteins, including itself, APLF, CHFR and NFAT5. In addition to proteins, also able to ADP-ribosylate DNA: catalyzes ADP-ribosylation of DNA strand break termini containing terminal phosphates and a 2'-OH group in single- and double-stranded DNA, respectively. Required for PARP9 and DTX3L recruitment to DNA damage sites. PARP1-dependent PARP9-DTX3L-mediated ubiquitination promotes the rapid and specific recruitment of 53BP1/TP53BP1, UIMC1/RAP80, and BRCA1 to DNA damage sites. PARP1-mediated DNA repair in neurons plays a role in sleep: senses DNA damage in neurons and promotes sleep, facilitating efficient DNA repair. In addition to DNA repair, also involved in other processes, such as transcription regulation, programmed cell death, membrane repair, adipogenesis and innate immunity. Acts as a repressor of transcription: binds to nucleosomes and modulates chromatin structure in a manner similar to histone H1, thereby altering RNA polymerase II. Acts both as a positive and negative regulator of transcription elongation, depending on the context. Acts as a positive regulator of transcription elongation by mediating poly-ADP-ribosylation of NELFE, preventing RNA-binding activity of NELFE and relieving transcription pausing. Acts as a negative regulator of transcription elongation in response to DNA damage by catalyzing poly-ADP-ribosylation of CCNT1, disrupting the phase separation activity of CCNT1 and subsequent activation of CDK9. Involved in replication fork progression following interaction with CARM1: mediates poly-ADP-ribosylation at replication forks, slowing fork progression. Poly-ADP-ribose chains generated by PARP1 also play a role in poly-ADP-ribose-dependent cell death, a process named parthanatos. Also acts as a negative regulator of the cGAS-STING pathway. Acts by mediating poly-ADP-ribosylation of CGAS: PARP1 translocates into the cytosol following phosphorylation by PRKDC and catalyzes poly-ADP-ribosylation and inactivation of CGAS. Acts as a negative regulator of adipogenesis: catalyzes poly-ADP-ribosylation of histone H2B on 'Glu-35' (H2BE35ADPr) following interaction with NMNAT1, inhibiting phosphorylation of H2B at 'Ser-36' (H2BS36ph), thereby blocking expression of pro-adipogenetic genes. Involved in the synthesis of ATP in the nucleus, together with NMNAT1, PARG and NUDT5. Nuclear ATP generation is required for extensive chromatin remodeling events that are energy-consuming. In terms of biological role, promotes AIFM1-mediated apoptosis. This form, which translocates into the cytoplasm following cleavage by caspase-3 (CASP3) and caspase-7 (CASP7) in response to apoptosis, is auto-poly-ADP-ribosylated and serves as a poly-ADP-ribose carrier to induce AIFM1-mediated apoptosis. Its function is as follows. This cleavage form irreversibly binds to DNA breaks and interferes with DNA repair, promoting DNA damage-induced apoptosis. The polypeptide is Poly [ADP-ribose] polymerase 1 (Parp1) (Mus musculus (Mouse)).